The following is a 28-amino-acid chain: Dolichyl-diphosphooligosaccharide--protein glycosyltransferase subunit 1 (28 aa).

Belongs to the OST1 family. As to quaternary structure, component of the oligosaccharyltransferase (OST) complex.

It is found in the endoplasmic reticulum membrane. The protein operates within protein modification; protein glycosylation. Its function is as follows. Subunit of the oligosaccharyl transferase (OST) complex that catalyzes the initial transfer of a defined glycan (Glc(3)Man(9)GlcNAc(2) in eukaryotes) from the lipid carrier dolichol-pyrophosphate to an asparagine residue within an Asn-X-Ser/Thr consensus motif in nascent polypeptide chains, the first step in protein N-glycosylation. N-glycosylation occurs cotranslationally and the complex associates with the Sec61 complex at the channel-forming translocon complex that mediates protein translocation across the endoplasmic reticulum (ER). All subunits are required for a maximal enzyme activity. This is Dolichyl-diphosphooligosaccharide--protein glycosyltransferase subunit 1 from Gallus gallus (Chicken).